We begin with the raw amino-acid sequence, 355 residues long: Phospho-N-acetylmuramoyl-pentapeptide-transferase (355 aa).

Helical transmembrane passes span Pro14–Phe34, Leu40–Pro60, Gly84–Trp104, Phe107–Leu127, Leu147–Ser167, Leu176–Ser196, Val205–Ala225, Ser227–Phe247, Ala268–Phe290, and Thr334–Ser354.

The protein belongs to the glycosyltransferase 4 family. MraY subfamily. The cofactor is Mg(2+).

The protein resides in the cell inner membrane. The enzyme catalyses UDP-N-acetyl-alpha-D-muramoyl-L-alanyl-gamma-D-glutamyl-meso-2,6-diaminopimeloyl-D-alanyl-D-alanine + di-trans,octa-cis-undecaprenyl phosphate = di-trans,octa-cis-undecaprenyl diphospho-N-acetyl-alpha-D-muramoyl-L-alanyl-D-glutamyl-meso-2,6-diaminopimeloyl-D-alanyl-D-alanine + UMP. Its pathway is cell wall biogenesis; peptidoglycan biosynthesis. Functionally, catalyzes the initial step of the lipid cycle reactions in the biosynthesis of the cell wall peptidoglycan: transfers peptidoglycan precursor phospho-MurNAc-pentapeptide from UDP-MurNAc-pentapeptide onto the lipid carrier undecaprenyl phosphate, yielding undecaprenyl-pyrophosphoryl-MurNAc-pentapeptide, known as lipid I. This is Phospho-N-acetylmuramoyl-pentapeptide-transferase from Microcystis aeruginosa (strain NIES-843 / IAM M-2473).